The primary structure comprises 490 residues: AP-5 complex subunit mu-1 (490 aa).

The region spanning Lys-206–Asn-476 is the MHD domain.

This sequence belongs to the adaptor complexes medium subunit family. As to quaternary structure, probably part of the adaptor protein complex 5 (AP-5) a tetramer composed of AP5B1, AP5M1, AP5S1 and AP5Z1.

Its subcellular location is the cytoplasm. The protein resides in the cytosol. It localises to the late endosome membrane. It is found in the lysosome membrane. Its function is as follows. As part of AP-5, a probable fifth adaptor protein complex it may be involved in endosomal transport. The chain is AP-5 complex subunit mu-1 (AP5M1) from Macaca fascicularis (Crab-eating macaque).